The sequence spans 78 residues: Large ribosomal subunit protein bL28 (78 aa).

Positions 1–31 (MAAHCQVTGAEPGFGHSISHSHRRNKRRFDP) are disordered.

Belongs to the bacterial ribosomal protein bL28 family.

The protein is Large ribosomal subunit protein bL28 of Pseudarthrobacter chlorophenolicus (strain ATCC 700700 / DSM 12829 / CIP 107037 / JCM 12360 / KCTC 9906 / NCIMB 13794 / A6) (Arthrobacter chlorophenolicus).